Here is a 628-residue protein sequence, read N- to C-terminus: CMP-5'-(3-aminopropyl)phosphonate synthase (628 aa).

Residues 1 to 255 (MNENRTFATP…DPGDQRQADF (255 aa)) form a mobA-like NTP transferase region. Residues 278-628 (GVTDHALLYN…TTEGAGRADG (351 aa)) form a decarboxylase region. Position 466 is an N6-(pyridoxal phosphate)lysine (Lys-466).

This sequence in the N-terminal section; belongs to the MobA family. In the C-terminal section; belongs to the class-I pyridoxal-phosphate-dependent aminotransferase family. It depends on Mg(2+) as a cofactor. The cofactor is pyridoxal 5'-phosphate.

The enzyme catalyses 2-amino-4-phosphonobutanoate + CTP = CMP-5'-(3-amino-3-carboxypropyl)phosphonate + diphosphate. The catalysed reaction is CMP-5'-(3-amino-3-carboxypropyl)phosphonate + H(+) = CMP-5'-(3-aminopropyl)phosphonate + CO2. Its pathway is antibiotic biosynthesis. Its function is as follows. Bifunctional cytidylyltransferase/decarboxylase involved in the biosynthesis of the phosphonate antibiotic FR-900098, a potent antimalarial agent that acts as an inhibitor of 1-deoxy-D-xylulose 5-phosphate reductoisomerase (DXR), the first enzyme in the nonmevalonate pathway for isoprenoid biosynthesis. Catalyzes the condensation of 2-amino-4-phosphonobutyrate (2APn) and CTP to form CMP-5'-2APn and then decarboxylates CMP-5'-2APn to yield CMP-5'-(3-aminopropyl)phosphonate (CMP-5'-3APn). This is CMP-5'-(3-aminopropyl)phosphonate synthase from Streptomyces rubellomurinus (strain ATCC 31215).